The sequence spans 238 residues: NADH-quinone oxidoreductase subunit C (238 aa).

The tract at residues Met-1–Glu-20 is disordered.

The protein belongs to the complex I 30 kDa subunit family. NDH-1 is composed of 14 different subunits. Subunits NuoB, C, D, E, F, and G constitute the peripheral sector of the complex.

It localises to the cell membrane. The catalysed reaction is a quinone + NADH + 5 H(+)(in) = a quinol + NAD(+) + 4 H(+)(out). NDH-1 shuttles electrons from NADH, via FMN and iron-sulfur (Fe-S) centers, to quinones in the respiratory chain. The immediate electron acceptor for the enzyme in this species is believed to be a menaquinone. Couples the redox reaction to proton translocation (for every two electrons transferred, four hydrogen ions are translocated across the cytoplasmic membrane), and thus conserves the redox energy in a proton gradient. The polypeptide is NADH-quinone oxidoreductase subunit C (Mycobacterium ulcerans (strain Agy99)).